The sequence spans 193 residues: Rho-related protein racB (193 aa).

Residues alanine 13, glycine 15, lysine 16, threonine 17, cysteine 18, tyrosine 32, threonine 35, glycine 60, lysine 116, aspartate 118, and alanine 159 each contribute to the GTP site. Residue threonine 17 participates in Mg(2+) binding. 2 short sequence motifs (switch) span residues 26–37 and 57–75; these read NAFPTEYVPTVF and DTAGQEDYDRIRPLSYPQT. Threonine 35 is a binding site for Mg(2+). Cysteine 190 is subject to Cysteine methyl ester. Cysteine 190 is lipidated: S-geranylgeranyl cysteine. A propeptide spans 191–193 (removed in mature form); the sequence is LIF.

The protein belongs to the small GTPase superfamily. Rho family. Requires Mg(2+) as cofactor.

The protein localises to the cell membrane. It is found in the cytoplasm. Its subcellular location is the cytoskeleton. It carries out the reaction GTP + H2O = GDP + phosphate + H(+). Its activity is regulated as follows. Regulated by guanine nucleotide exchange factors (GEFs) which promote the exchange of bound GDP for free GTP, GTPase activating proteins (GAPs) which increase the GTP hydrolysis activity, and GDP dissociation inhibitors which inhibit the dissociation of the nucleotide from the GTPase. Small GTPase which cycles between active GTP-bound and inactive GDP-bound states. This Entamoeba histolytica (strain ATCC 30459 / HM-1:IMSS / ABRM) protein is Rho-related protein racB.